A 72-amino-acid chain; its full sequence is Small ribosomal subunit protein bS20 (72 aa).

Belongs to the bacterial ribosomal protein bS20 family.

Its function is as follows. Binds directly to 16S ribosomal RNA. The chain is Small ribosomal subunit protein bS20 (rpsT) from Aeromonas salmonicida.